Here is a 290-residue protein sequence, read N- to C-terminus: 4-hydroxybenzoate octaprenyltransferase (290 aa).

The next 8 helical transmembrane spans lie at 23-43, 46-66, 99-119, 141-161, 163-183, 212-232, 233-253, and 268-288; these read IGAL…TPGM, LWIL…GCVV, LFVV…AMTI, LPQV…FAAV, ESLP…AVAY, TLII…IGWL, NGLG…FVYQ, and AFMN…MSYW.

The protein belongs to the UbiA prenyltransferase family. Requires Mg(2+) as cofactor.

It localises to the cell inner membrane. The catalysed reaction is all-trans-octaprenyl diphosphate + 4-hydroxybenzoate = 4-hydroxy-3-(all-trans-octaprenyl)benzoate + diphosphate. Its pathway is cofactor biosynthesis; ubiquinone biosynthesis. Functionally, catalyzes the prenylation of para-hydroxybenzoate (PHB) with an all-trans polyprenyl group. Mediates the second step in the final reaction sequence of ubiquinone-8 (UQ-8) biosynthesis, which is the condensation of the polyisoprenoid side chain with PHB, generating the first membrane-bound Q intermediate 3-octaprenyl-4-hydroxybenzoate. The chain is 4-hydroxybenzoate octaprenyltransferase from Salmonella typhi.